An 829-amino-acid polypeptide reads, in one-letter code: GTPase-activating protein GYP5 (829 aa).

Residues 1-243 (MVEAGAKISK…VPPPLSEELK (243 aa)) form a disordered region. The span at 38-50 (AEHETQDSAKAQE) shows a compositional bias: basic and acidic residues. A compositionally biased stretch (low complexity) spans 101–115 (TAAAAGALPGIGRAR). 2 stretches are compositionally biased toward basic and acidic residues: residues 142-151 (KDAKISERAE) and 189-220 (KQAEGEQSRPEGEQGRPENKNKKAKDKHDDLP). Residues 279-341 (INRLRVNAQE…DEEEEEMRKI (63 aa)) are a coiled coil. The region spanning 371–550 (GIPKQIRGII…RILDVIFVEG (180 aa)) is the Rab-GAP TBC domain. Disordered regions lie at residues 600–620 (GKEDTNAIQNAEVSDSSSKSS) and 790–812 (LKKNRANTSVEHGEDSSSEPRVR). Residues 666-803 (FQREAQYEEM…RANTSVEHGE (138 aa)) adopt a coiled-coil conformation. Positions 800–811 (EHGEDSSSEPRV) are enriched in basic and acidic residues.

Belongs to the GYP5 family.

The protein localises to the cytoplasm. Its function is as follows. GTPase-activating protein which accelerates the GTP hydrolysis rate of several GTPases. Involved in ER to Golgi trafficking and polarized exocytosis. The polypeptide is GTPase-activating protein GYP5 (GYP5) (Eremothecium gossypii (strain ATCC 10895 / CBS 109.51 / FGSC 9923 / NRRL Y-1056) (Yeast)).